The chain runs to 140 residues: NTF2-related export protein 1 (140 aa).

Ala-2 bears the N-acetylalanine mark. The region spanning 16-135 is the NTF2 domain; that stretch reads AAEEFVNVYY…WKIASDCFRF (120 aa).

Heterodimer with NXF1. Forms a complex with RANGAP1, RANBP2/NUP358 and NXF1. Interacts (via NTF2 domain) with NXF1. Stabilizes the NTF2 domain of NXF1 by heterodimerization. The formation of NXF1-NXT1 heterodimers is required for the NXF1-mediated nuclear mRNA export. Preferentially binds Ran-GTP. Associates with NXF2, NXF3 and NXF5. Does not bind nucleoporins (NPC) directly, its association to NPC is mediated by NXF1.

The protein resides in the nucleus. It is found in the nucleus speckle. The protein localises to the cytoplasm. Stimulator of protein export for NES-containing proteins. Also plays a role in the nuclear export of U1 snRNA, tRNA, and mRNA. The NXF1-NXT1 heterodimer is involved in the export of HSP70 mRNA in conjunction with ALYREF/THOC4 and THOC5. The protein is NTF2-related export protein 1 (NXT1) of Bos taurus (Bovine).